Consider the following 449-residue polypeptide: Kynurenine 3-monooxygenase (449 aa).

Belongs to the aromatic-ring hydroxylase family. KMO subfamily. FAD serves as cofactor.

The enzyme catalyses L-kynurenine + NADPH + O2 + H(+) = 3-hydroxy-L-kynurenine + NADP(+) + H2O. Its pathway is cofactor biosynthesis; NAD(+) biosynthesis; quinolinate from L-kynurenine: step 1/3. In terms of biological role, catalyzes the hydroxylation of L-kynurenine (L-Kyn) to form 3-hydroxy-L-kynurenine (L-3OHKyn). Required for synthesis of quinolinic acid. This is Kynurenine 3-monooxygenase from Legionella pneumophila (strain Lens).